We begin with the raw amino-acid sequence, 513 residues long: Cytochrome P450 monooxygenase orf3 (513 aa).

The helical transmembrane segment at 11-31 (LVALGLIAATIIIYSFTLTVY) threads the bilayer. 2 N-linked (GlcNAc...) asparagine glycosylation sites follow: N211 and N351. A heme-binding site is contributed by C455.

The protein belongs to the cytochrome P450 family. It depends on heme as a cofactor.

The protein resides in the membrane. It participates in mycotoxin biosynthesis. Cytochrome P450 monooxygenase; part of the gene cluster that mediates the biosynthesis of brefeldin A (BFA), a protein transport inhibitor that shows antiviral, antifungal, and antitumor properties. The proposed biosynthesis of BFA involves formation of an acyclic polyketide chain that is differentially tailored throughout the backbone. The highly reducing polyketide synthase Bref-PKS is proposed to synthesize the precisely reduced octaketide precursor, which could then be directly offloaded by the thiohydrolase enzyme Bref-TH followed by a cytochrome P450 monooxygenase-mediated formation of the cyclopentane ring and macrocyclization to afford 7-deoxy BFA. Alternatively, the first ring annulation can also occur on the ACP-tethered intermediate before the thiohydrolase release and lactonization. The C7-hydroxylation by another cytochrome P450 monooxygenase is believed to be the final step in the process to obtain the final structure of BFA. In addition to the HRPKS Bref-PKS and the thiohydrolase Bref-TH, the brefeldin A biosynthesis cluster contains 4 cytochrome p450 monooxygenases (called orf3 to orf6), as well a the probable cluster-specific transcription regulator orf8. The chain is Cytochrome P450 monooxygenase orf3 from Eupenicillium brefeldianum (Penicillium brefeldianum).